The sequence spans 385 residues: Glucose-fructose oxidoreductase domain-containing protein 2 (385 aa).

The first 25 residues, 1-25 (MKMLPGVGVFGTGSSARVLVPLLRA), serve as a signal peptide directing secretion.

This sequence belongs to the Gfo/Idh/MocA family.

Its subcellular location is the secreted. The protein localises to the extracellular space. The protein resides in the extracellular matrix. Its function is as follows. Promotes matrix assembly. The polypeptide is Glucose-fructose oxidoreductase domain-containing protein 2 (GFOD2) (Bos taurus (Bovine)).